A 663-amino-acid polypeptide reads, in one-letter code: MLQMPKLNEIPPGRGGPGEPWGEGRWAGPTGPEAARPARGARGQARGARARWDSWEHSRLPTHPGPGWDQCSPSFLCAPSSQKLIMESKDEVSDSDSGIILQSGPDSPVSPMKELTNAVRKQQRALEARLEACLEELRRLCLREAELTGTLPAEYPLKPGEKAPKVRRRIGAAYKLDEWALHREDPLSSLERQLALQLQITEAARRLCAEENLSRQARRQRKHAALQEEKKLRDLQRCLGDRRRNSEPPPTTVPSLGRELSASDDSSLSDGLLLEEEDSQAPKPPPESPAPPSRPLPPQSLEGLQPTGPESGGQERAPIQNSPWKETSLDHPYEKPRKSSELSSESSSPATTPQDQPNPSSLWVLDAASYHVVPIRNVPGQRQGRTSAPATPEMQGRRGQSQSLRVDSFRAGAEGRGRSAFPRRRPTHYTVTVPDSCFTPGKPPLPHPACHSCSEDSGSDVSSISHPTSPGSSSPDISFLRPLCLPEPPRHRGAWGPACGRELAPHYSKLLLPAGYFPTGRYVMVAEGHLPPGEWELCRAAVGAAYDEEGAPLRYQRLVPSHSRIVRTPSLKDSPAGRGLSKAAVSEELKWWHERARLRSSRPHSLDRQGAFRVRSLPPGRESFGRASGPRTQVPPVYVLRRSTDGAPVQVFVPENGEIISQV.

The disordered stretch occupies residues 1–73 (MLQMPKLNEI…PGPGWDQCSP (73 aa)). The span at 23–47 (EGRWAGPTGPEAARPARGARGQARG) shows a compositional bias: low complexity. The span at 50-59 (ARWDSWEHSR) shows a compositional bias: basic and acidic residues. A coiled-coil region spans residues 117–147 (NAVRKQQRALEARLEACLEELRRLCLREAEL). Residues 164–170 (PKVRRRI) carry the Nuclear localization signal (NLS) 1 motif. 2 disordered regions span residues 219–363 (RQRK…SSLW) and 375–405 (IRNV…QSLR). A compositionally biased stretch (basic and acidic residues) spans 225–246 (ALQEEKKLRDLQRCLGDRRRNS). A compositionally biased stretch (low complexity) spans 259–272 (ELSASDDSSLSDGL). The segment covering 282–298 (PKPPPESPAPPSRPLPP) has biased composition (pro residues). A compositionally biased stretch (basic and acidic residues) spans 327-340 (TSLDHPYEKPRKSS). The Nuclear localization signal (NLS) 2 motif lies at 332–338 (PYEKPRK). A compositionally biased stretch (polar residues) spans 349 to 361 (PATTPQDQPNPSS). Positions 422–428 (PRRRPTH) match the Nuclear localization signal (NLS) 3 motif. A disordered region spans residues 448–483 (PACHSCSEDSGSDVSSISHPTSPGSSSPDISFLRPL). Low complexity predominate over residues 455–475 (EDSGSDVSSISHPTSPGSSSP).

In terms of assembly, interacts with IRAK1, NOD2 and RIPK2; the interaction takes place upon PRR stimulation. Interacts with YWHAQ/14-3-3T; the interaction increases upon PRR stimulation and is required for cellular signaling pathway activation and cytokine secretion. Interacts (via N-terminal domain) with CYTH1 and CYTH2 (via their N-terminal domains). Interacts with FBXW11 and BTRC; associates with SCF E3 ubiquitin-protein ligase complexes.

It localises to the nucleus. Its subcellular location is the cytoplasm. Functionally, expressed in peripheral macrophages and intestinal myeloid-derived cells, is required for optimal PRR (pattern recognition receptor)-induced signaling, cytokine secretion, and bacterial clearance. Upon stimulation of a broad range of PRRs (pattern recognition receptor) such as NOD2 or TLR2, TLR3, TLR4, TLR5, TLR7 and TLR9, associates with YWHAQ/14-3-3T, which in turn leads to the recruitment and activation of MAP kinases and NF-kappa-B signaling complexes that amplifies PRR-induced downstream signals and cytokine secretion. In the intestine, regulates adherens junction stability by regulating the degradation of CYTH1 and CYTH2, probably acting as substrate cofactor for SCF E3 ubiquitin-protein ligase complexes. Stabilizes adherens junctions by limiting CYTH1-dependent ARF6 activation. The protein is Innate immunity activator protein of Mus musculus (Mouse).